The chain runs to 497 residues: Putative glucuronosyltransferase PGSIP8 (497 aa).

The chain crosses the membrane as a helical span at residues 3 to 23 (LQRGFVFLSLVLSFMIIETTA). Residues aspartate 165 and aspartate 167 each coordinate Mn(2+). Transmembrane regions (helical) follow at residues 319–339 (YSAE…IIVV), 365–385 (GFKL…FFTI), 388–408 (TIHP…LSSI), 418–438 (LPVL…AFPW), and 442–462 (GVVR…FVWV).

Belongs to the glycosyltransferase 8 family. Glycogenin subfamily. Requires Mn(2+) as cofactor.

It localises to the membrane. The chain is Putative glucuronosyltransferase PGSIP8 (PGSIP8) from Arabidopsis thaliana (Mouse-ear cress).